Here is a 365-residue protein sequence, read N- to C-terminus: S-adenosylmethionine:tRNA ribosyltransferase-isomerase (365 aa).

The protein belongs to the QueA family. Monomer.

The protein localises to the cytoplasm. The catalysed reaction is 7-aminomethyl-7-carbaguanosine(34) in tRNA + S-adenosyl-L-methionine = epoxyqueuosine(34) in tRNA + adenine + L-methionine + 2 H(+). The protein operates within tRNA modification; tRNA-queuosine biosynthesis. Transfers and isomerizes the ribose moiety from AdoMet to the 7-aminomethyl group of 7-deazaguanine (preQ1-tRNA) to give epoxyqueuosine (oQ-tRNA). This is S-adenosylmethionine:tRNA ribosyltransferase-isomerase from Rickettsia peacockii (strain Rustic).